We begin with the raw amino-acid sequence, 205 residues long: Small ribosomal subunit protein uS4 (205 aa).

The region spanning 94-157 is the S4 RNA-binding domain; sequence SRLDTVVYRM…KQIPLIQESV (64 aa).

The protein belongs to the universal ribosomal protein uS4 family. In terms of assembly, part of the 30S ribosomal subunit. Contacts protein S5. The interaction surface between S4 and S5 is involved in control of translational fidelity.

One of the primary rRNA binding proteins, it binds directly to 16S rRNA where it nucleates assembly of the body of the 30S subunit. Functionally, with S5 and S12 plays an important role in translational accuracy. The protein is Small ribosomal subunit protein uS4 of Rickettsia felis (strain ATCC VR-1525 / URRWXCal2) (Rickettsia azadi).